The primary structure comprises 40 residues: Photosystem II reaction center protein J (40 aa).

A helical transmembrane segment spans residues Ile-8 to Phe-28.

The protein belongs to the PsbJ family. In terms of assembly, PSII is composed of 1 copy each of membrane proteins PsbA, PsbB, PsbC, PsbD, PsbE, PsbF, PsbH, PsbI, PsbJ, PsbK, PsbL, PsbM, PsbT, PsbX, PsbY, PsbZ, Psb30/Ycf12, at least 3 peripheral proteins of the oxygen-evolving complex and a large number of cofactors. It forms dimeric complexes.

The protein resides in the plastid. Its subcellular location is the chloroplast thylakoid membrane. Its function is as follows. One of the components of the core complex of photosystem II (PSII). PSII is a light-driven water:plastoquinone oxidoreductase that uses light energy to abstract electrons from H(2)O, generating O(2) and a proton gradient subsequently used for ATP formation. It consists of a core antenna complex that captures photons, and an electron transfer chain that converts photonic excitation into a charge separation. The sequence is that of Photosystem II reaction center protein J from Zea mays (Maize).